The chain runs to 172 residues: uncharacterized protein (172 aa).

The next 3 helical transmembrane spans lie at 16 to 36, 68 to 88, and 89 to 109; these read IMIVIAIIITIGSFLFIAYLI, SFLIISLLCFYFGMLYIAGEL, and VISHILFIAICWIVVFLYIII.

The protein localises to the cell membrane. This is an uncharacterized protein from Methanocaldococcus jannaschii (strain ATCC 43067 / DSM 2661 / JAL-1 / JCM 10045 / NBRC 100440) (Methanococcus jannaschii).